Reading from the N-terminus, the 111-residue chain is Sulditoxin subunit B (111 aa).

The signal sequence occupies residues methionine 1–alanine 19. Residues asparagine 20 to arginine 34 constitute a propeptide that is removed on maturation. Glutamine 35 is subject to Pyrrolidone carboxylic acid. 5 disulfides stabilise this stretch: cysteine 44/cysteine 68, cysteine 47/cysteine 55, cysteine 61/cysteine 87, cysteine 91/cysteine 102, and cysteine 103/cysteine 108.

Belongs to the three-finger toxin family. Ancestral subfamily. Boigatoxin sub-subfamily. Heterodimer of sulditoxin subunits A and B; probably disulfide-linked. As to expression, expressed by the venom gland.

It is found in the secreted. Reptile-specific neurotoxin (tested on geckos). Inhibits nicotinic acetylcholine receptor (nAChR). Not toxic to mammals (tested on mice). The sequence is that of Sulditoxin subunit B from Spilotes sulphureus (Amazon puffing snake).